A 352-amino-acid chain; its full sequence is Ferredoxin--NADP reductase 2 (352 aa).

Positions 36, 44, 48, 88, 123, 290, and 331 each coordinate FAD.

Belongs to the ferredoxin--NADP reductase type 2 family. Homodimer. FAD is required as a cofactor.

It carries out the reaction 2 reduced [2Fe-2S]-[ferredoxin] + NADP(+) + H(+) = 2 oxidized [2Fe-2S]-[ferredoxin] + NADPH. This is Ferredoxin--NADP reductase 2 from Exiguobacterium sibiricum (strain DSM 17290 / CCUG 55495 / CIP 109462 / JCM 13490 / 255-15).